The chain runs to 372 residues: Septin-1 (372 aa).

Residues 27–301 (KGFDFTLMVA…EGYRARCLQS (275 aa)) form the Septin-type G domain. The interval 37-44 (GESGLGKS) is G1 motif. GTP contacts are provided by residues 37–44 (GESGLGKS), Thr71, Gly97, and 176–184 (KADALMPQE). The interval 94–97 (DTPG) is G3 motif. Residues 175 to 178 (GKAD) are G4 motif. Residue Ser211 is modified to Phosphoserine. Residues Gly234 and Arg250 each coordinate GTP. Position 253 is a phosphoserine; by AURKB (Ser253). Thr256 is modified (phosphothreonine). Phosphoserine; by AURKB occurs at positions 312 and 320. The interval 352–372 (LEKMQAQMQQSQAQGEQSDAL) is disordered. Positions 355 to 372 (MQAQMQQSQAQGEQSDAL) are enriched in low complexity.

Belongs to the TRAFAC class TrmE-Era-EngA-EngB-Septin-like GTPase superfamily. Septin GTPase family. As to quaternary structure, septins polymerize into heterooligomeric protein complexes that form filaments, and can associate with cellular membranes, actin filaments and microtubules. GTPase activity is required for filament formation. Interacts with AURKB. In terms of tissue distribution, expressed at high levels in lymphoid and hematopoietic tissues.

It is found in the cytoplasm. The protein resides in the cytoskeleton. Its subcellular location is the microtubule organizing center. It localises to the centrosome. The protein localises to the midbody. Functionally, filament-forming cytoskeletal GTPase. May play a role in cytokinesis (Potential). The protein is Septin-1 of Homo sapiens (Human).